The chain runs to 480 residues: Siroheme synthase (480 aa).

The segment at 1 to 203 (MNYFPIFANL…QQTAQAEQEL (203 aa)) is precorrin-2 dehydrogenase /sirohydrochlorin ferrochelatase. NAD(+) contacts are provided by residues 22-23 (SV) and 43-44 (NQ). Position 128 is a phosphoserine (Ser128). A uroporphyrinogen-III C-methyltransferase region spans residues 214–480 (GFVSLVGAGP…GGLNAGQRAA (267 aa)). An S-adenosyl-L-methionine-binding site is contributed by Pro223. The Proton acceptor role is filled by Asp246. Residue Lys268 is the Proton donor of the active site. S-adenosyl-L-methionine is bound by residues 299–301 (GGD), Val304, 329–330 (TA), Met381, and Gly410.

In the N-terminal section; belongs to the precorrin-2 dehydrogenase / sirohydrochlorin ferrochelatase family. The protein in the C-terminal section; belongs to the precorrin methyltransferase family.

The enzyme catalyses uroporphyrinogen III + 2 S-adenosyl-L-methionine = precorrin-2 + 2 S-adenosyl-L-homocysteine + H(+). It catalyses the reaction precorrin-2 + NAD(+) = sirohydrochlorin + NADH + 2 H(+). It carries out the reaction siroheme + 2 H(+) = sirohydrochlorin + Fe(2+). It functions in the pathway cofactor biosynthesis; adenosylcobalamin biosynthesis; precorrin-2 from uroporphyrinogen III: step 1/1. It participates in cofactor biosynthesis; adenosylcobalamin biosynthesis; sirohydrochlorin from precorrin-2: step 1/1. The protein operates within porphyrin-containing compound metabolism; siroheme biosynthesis; precorrin-2 from uroporphyrinogen III: step 1/1. Its pathway is porphyrin-containing compound metabolism; siroheme biosynthesis; siroheme from sirohydrochlorin: step 1/1. It functions in the pathway porphyrin-containing compound metabolism; siroheme biosynthesis; sirohydrochlorin from precorrin-2: step 1/1. In terms of biological role, multifunctional enzyme that catalyzes the SAM-dependent methylations of uroporphyrinogen III at position C-2 and C-7 to form precorrin-2 via precorrin-1. Then it catalyzes the NAD-dependent ring dehydrogenation of precorrin-2 to yield sirohydrochlorin. Finally, it catalyzes the ferrochelation of sirohydrochlorin to yield siroheme. The chain is Siroheme synthase from Neisseria meningitidis serogroup C (strain 053442).